A 359-amino-acid chain; its full sequence is tRNA-specific 2-thiouridylase MnmA (359 aa).

Residues 7–14 and Met33 contribute to the ATP site; that span reads AMSGGVDS. Cys101 serves as the catalytic Nucleophile. Cys101 and Cys198 are disulfide-bonded. An ATP-binding site is contributed by Gly125. The interval 148–150 is interaction with tRNA; sequence KDQ. The active-site Cysteine persulfide intermediate is Cys198.

This sequence belongs to the MnmA/TRMU family.

The protein resides in the cytoplasm. It catalyses the reaction S-sulfanyl-L-cysteinyl-[protein] + uridine(34) in tRNA + AH2 + ATP = 2-thiouridine(34) in tRNA + L-cysteinyl-[protein] + A + AMP + diphosphate + H(+). Catalyzes the 2-thiolation of uridine at the wobble position (U34) of tRNA, leading to the formation of s(2)U34. The protein is tRNA-specific 2-thiouridylase MnmA of Chloroflexus aggregans (strain MD-66 / DSM 9485).